Reading from the N-terminus, the 398-residue chain is Candidapepsin-2 (398 aa).

Residues M1–A18 form the signal peptide. Residues T19–R56 constitute a propeptide, activation peptide. A Peptidase A1 domain is found at Y70–A384. D88 is a catalytic residue. D88–G90 contributes to the pepstatin A binding site. A disulfide bridge connects residues C103 and C115. Pepstatin A is bound by residues G141–D142 and D274–T278. D274 is a catalytic residue. C312 and C350 are joined by a disulfide. N-linked (GlcNAc...) asparagine glycans are attached at residues N313 and N321.

It belongs to the peptidase A1 family. As to quaternary structure, monomer. In terms of processing, O-glycosylated.

It localises to the secreted. It carries out the reaction Preferential cleavage at the carboxyl of hydrophobic amino acids, but fails to cleave 15-Leu-|-Tyr-16, 16-Tyr-|-Leu-17 and 24-Phe-|-Phe-25 of insulin B chain. Activates trypsinogen, and degrades keratin.. The polypeptide is Candidapepsin-2 (SAP2) (Candida albicans (strain WO-1) (Yeast)).